A 402-amino-acid polypeptide reads, in one-letter code: Flavohemoprotein (402 aa).

A Globin domain is found at Met-1–Ala-136. His-85 lines the heme b pocket. Active-site charge relay system residues include Tyr-95 and Glu-135. The segment at Gly-147–Gln-402 is reductase. One can recognise an FAD-binding FR-type domain in the interval Lys-150–Asn-260. Residues Tyr-188 and Arg-204 to Ser-207 contribute to the FAD site. Gly-273–Pro-278 lines the NADP(+) pocket. FAD is bound at residue Phe-394–Pro-397.

This sequence belongs to the globin family. Two-domain flavohemoproteins subfamily. The protein in the C-terminal section; belongs to the flavoprotein pyridine nucleotide cytochrome reductase family. Heme b serves as cofactor. It depends on FAD as a cofactor.

The catalysed reaction is 2 nitric oxide + NADPH + 2 O2 = 2 nitrate + NADP(+) + H(+). The enzyme catalyses 2 nitric oxide + NADH + 2 O2 = 2 nitrate + NAD(+) + H(+). Functionally, is involved in NO detoxification in an aerobic process, termed nitric oxide dioxygenase (NOD) reaction that utilizes O(2) and NAD(P)H to convert NO to nitrate, which protects the bacterium from various noxious nitrogen compounds. Therefore, plays a central role in the inducible response to nitrosative stress. This chain is Flavohemoprotein, found in Bacillus cereus (strain ATCC 10987 / NRS 248).